A 215-amino-acid polypeptide reads, in one-letter code: Probable serine/threonine-protein kinase 2 (215 aa).

The Protein kinase domain maps to 1–205 (MKPEQLVYLN…WLLKEMEQLL (205 aa)).

It belongs to the protein kinase superfamily. Ser/Thr protein kinase family. Interacts with the kinase domain of host EIF2AK2.

It is found in the host cytoplasm. It catalyses the reaction L-seryl-[protein] + ATP = O-phospho-L-seryl-[protein] + ADP + H(+). The enzyme catalyses L-threonyl-[protein] + ATP = O-phospho-L-threonyl-[protein] + ADP + H(+). Plays a role in the inhibition of host eIF2alpha/EIF2S1 phosphorylation, thereby increasing viral fitness. In the insect host, targets the endogenous insect heme-regulated inhibitor (HRI)-like eIF2alpha kinase. The chain is Probable serine/threonine-protein kinase 2 (PK2) from Autographa californica nuclear polyhedrosis virus (AcMNPV).